A 533-amino-acid polypeptide reads, in one-letter code: Decreased expression in renal and prostate cancer protein (533 aa).

Over residues 1 to 12 (MKEPRIFPRERP) the composition is skewed to basic and acidic residues. Disordered stretches follow at residues 1–31 (MKEPRIFPRERPTPWTRAPLPPRGRLDGGPV), 67–164 (QNPS…PDPR), 177–259 (MRAG…RAGG), and 299–350 (ASGN…PNSA). Ser-160 is subject to Phosphoserine. Residues 299-309 (ASGNMGTNPPT) are compositionally biased toward polar residues. Asymmetric dimethylarginine is present on Arg-368. Arg-396 carries the post-translational modification Omega-N-methylarginine. Residue Ser-432 is modified to Phosphoserine.

Belongs to the DERPC family.

It is found in the nucleus. Potential tumor suppressor. This Mus musculus (Mouse) protein is Decreased expression in renal and prostate cancer protein.